The chain runs to 962 residues: Glycine dehydrogenase (decarboxylating) (962 aa).

Lys709 carries the post-translational modification N6-(pyridoxal phosphate)lysine.

It belongs to the GcvP family. In terms of assembly, the glycine cleavage system is composed of four proteins: P, T, L and H. Requires pyridoxal 5'-phosphate as cofactor.

The enzyme catalyses N(6)-[(R)-lipoyl]-L-lysyl-[glycine-cleavage complex H protein] + glycine + H(+) = N(6)-[(R)-S(8)-aminomethyldihydrolipoyl]-L-lysyl-[glycine-cleavage complex H protein] + CO2. Its function is as follows. The glycine cleavage system catalyzes the degradation of glycine. The P protein binds the alpha-amino group of glycine through its pyridoxal phosphate cofactor; CO(2) is released and the remaining methylamine moiety is then transferred to the lipoamide cofactor of the H protein. The polypeptide is Glycine dehydrogenase (decarboxylating) (Shewanella loihica (strain ATCC BAA-1088 / PV-4)).